The following is an 87-amino-acid chain: U3-theraphotoxin-Hhn1g (87 aa).

The signal sequence occupies residues 1–24 (MVNMKASMFLTFAGLVLLFVVCFA). Positions 25-52 (SESEEKEFPKEMLSSIFAVDNDFKQEER) are excised as a propeptide. 3 cysteine pairs are disulfide-bonded: Cys54/Cys67, Cys61/Cys72, and Cys66/Cys79.

The protein belongs to the neurotoxin 10 (Hwtx-1) family. 51 (Hntx-8) subfamily. Hntx-8 sub-subfamily. Expressed by the venom gland.

It localises to the secreted. Its function is as follows. Ion channel inhibitor. In Cyriopagopus hainanus (Chinese bird spider), this protein is U3-theraphotoxin-Hhn1g.